Here is a 389-residue protein sequence, read N- to C-terminus: Lipid-A-disaccharide synthase (389 aa).

The protein belongs to the LpxB family.

The catalysed reaction is a lipid X + a UDP-2-N,3-O-bis[(3R)-3-hydroxyacyl]-alpha-D-glucosamine = a lipid A disaccharide + UDP + H(+). Its pathway is bacterial outer membrane biogenesis; LPS lipid A biosynthesis. Functionally, condensation of UDP-2,3-diacylglucosamine and 2,3-diacylglucosamine-1-phosphate to form lipid A disaccharide, a precursor of lipid A, a phosphorylated glycolipid that anchors the lipopolysaccharide to the outer membrane of the cell. This Burkholderia orbicola (strain MC0-3) protein is Lipid-A-disaccharide synthase.